The sequence spans 136 residues: Heme-binding protein Rv0203 (136 aa).

The first 27 residues, 1 to 27 (MKTGTATTRRRLLAVLIALALPGAAVA), serve as a signal peptide directing secretion. A disulfide bridge links Cys41 with Cys115. Heme contacts are provided by Tyr60, His64, and His90.

Dimer of dimers.

The protein localises to the secreted. Its function is as follows. Part of a heme-iron acquisition system. Acts by binding heme and delivering it to the membrane proteins MmpL3 and MmpL11. Can use free heme or heme from host hemoglobin. The sequence is that of Heme-binding protein Rv0203 from Mycobacterium tuberculosis (strain ATCC 25618 / H37Rv).